Here is a 546-residue protein sequence, read N- to C-terminus: Calnexin homolog (546 aa).

The signal sequence occupies residues 1-25 (MGERKGIPMALGLLAMILFFIASSS). Residues 26 to 475 (SHLVRASDDA…EKAEKQPNLT (450 aa)) lie on the Lumenal side of the membrane. Residues Ser-43 and Asp-74 each contribute to the Ca(2+) site. An intrachain disulfide couples Cys-117 to Cys-152. Residues Tyr-121, Lys-123, Tyr-143, and Asp-150 each coordinate an alpha-D-glucoside. A disordered region spans residues 217–329 (LSSEDFEPPL…PGCGEWKRPT (113 aa)). Residues 232–365 (IPDPDDKKPE…REIPNPEYFE (134 aa)) are p domain (Extended arm). Over residues 233 to 249 (PDPDDKKPEDWDERAKI) the composition is skewed to basic and acidic residues. A run of 5 repeats spans residues 234–245 (DPDDKKPEDWDE), 251–262 (DPSAVKPDDWDE), 270–281 (DEEAEKPEGWLD), 289–300 (DPEATKPEDWDD), and 304–314 (GEWEAPKIENP). 4 X approximate repeats stretches follow at residues 234-300 (DPDD…DWDD) and 304-361 (GEWE…IPNP). 2 stretches are compositionally biased toward acidic residues: residues 259–290 (DWDEDAPMEILDEEAEKPEGWLDDEPEEIDDP) and 297–306 (DWDDEEDGEW). A disulfide bridge connects residues Cys-316 and Cys-322. 3 consecutive repeat copies span residues 323–333 (GEWKRPTKRNP), 337–347 (GKWSAPYIDNP), and 351–361 (GIWKPREIPNP). Glu-380 contacts an alpha-D-glucoside. Residue Asp-391 coordinates Ca(2+). Asn-473 carries an N-linked (GlcNAc...) asparagine glycan. The chain crosses the membrane as a helical span at residues 476–496 (IGILVAVVVVFVSIFFRLIFG). The Cytoplasmic segment spans residues 497-546 (GKKPAKVEKKPERTEASNNQGSGENEENKEKEKQKEEASNAARRRPRRET). 2 stretches are compositionally biased toward basic and acidic residues: residues 501-511 (AKVEKKPERTE) and 522-534 (EENKEKEKQKEEA). The tract at residues 501-546 (AKVEKKPERTEASNNQGSGENEENKEKEKQKEEASNAARRRPRRET) is disordered.

Belongs to the calreticulin family.

It is found in the endoplasmic reticulum membrane. Its function is as follows. Calcium-binding protein that interacts with newly synthesized monoglucosylated glycoproteins in the endoplasmic reticulum. It may act in assisting protein assembly and/or in the retention within the ER of unassembled protein subunits. It seems to play a major role in the quality control apparatus of the ER by the retention of incorrectly folded proteins. In Glycine max (Soybean), this protein is Calnexin homolog.